Consider the following 323-residue polypeptide: D-alanine--D-alanine ligase (323 aa).

Residues 120–319 (LSVLKPYGIK…LEDLFTNAIE (200 aa)) form the ATP-grasp domain. 148 to 203 (VKKVGLPCFVKPNKAGSSFGISKVKSEAELPIAIEVAYKEDNEIIIESFLDGTEVS) is a binding site for ATP. Residues glutamate 274, glutamate 286, and asparagine 288 each contribute to the Mg(2+) site.

This sequence belongs to the D-alanine--D-alanine ligase family. Mg(2+) is required as a cofactor. Mn(2+) serves as cofactor.

Its subcellular location is the cytoplasm. The enzyme catalyses 2 D-alanine + ATP = D-alanyl-D-alanine + ADP + phosphate + H(+). Its pathway is cell wall biogenesis; peptidoglycan biosynthesis. Functionally, cell wall formation. This chain is D-alanine--D-alanine ligase, found in Flavobacterium johnsoniae (strain ATCC 17061 / DSM 2064 / JCM 8514 / BCRC 14874 / CCUG 350202 / NBRC 14942 / NCIMB 11054 / UW101) (Cytophaga johnsonae).